A 103-amino-acid chain; its full sequence is MEQTLTRLHTYLQQYTKHSPRVVYALLSRGYVIILIVHPSWNDCATGHILIMLLNWHEQKEEGQHLLYLFIKHNQGYTLNILRYLLDRFDIQKDEYIYRLSKL.

This is an uncharacterized protein from Homo sapiens (Human).